The primary structure comprises 57 residues: Serine protease inhibitor Kazal-type 1 (57 aa).

The Kazal-like domain maps to 4–57 (LQRQANCNLKVNGCNKIYNPICGSDGITYANECLLCLENKKRQTSILVEKSGPC). 3 cysteine pairs are disulfide-bonded: Cys-10–Cys-39, Cys-17–Cys-36, and Cys-25–Cys-57.

It localises to the secreted. Functionally, serine protease inhibitor which exhibits anti-trypsin activity. In the pancreas, protects against trypsin-catalyzed premature activation of zymogens. In the male reproductive tract, binds to sperm heads where it modulates sperm capacitance by inhibiting calcium uptake and nitrogen oxide (NO) production. The protein is Serine protease inhibitor Kazal-type 1 (SPINK1) of Canis lupus familiaris (Dog).